The sequence spans 178 residues: Endothelin-2 (178 aa).

The first 26 residues, 1–26 (MVAMPTAWCSIALALLLALHEGKGQV), serve as a signal peptide directing secretion. Positions 27–46 (AAAPDQPAPSHRARASHLRP) are excised as a propeptide. Disulfide bonds link Cys49-Cys63 and Cys51-Cys59. A propeptide spanning residues 70–178 (VNTPGQTAPY…RPTHSRRWKR (109 aa)) is cleaved from the precursor. Positions 96–111 (CECSSGRDPACATFCH) are endothelin-like.

The protein belongs to the endothelin/sarafotoxin family.

The protein resides in the secreted. Endothelins are endothelium-derived vasoconstrictor peptides. This is Endothelin-2 (EDN2) from Felis catus (Cat).